A 310-amino-acid chain; its full sequence is ADP-L-glycero-D-manno-heptose-6-epimerase (310 aa).

NADP(+) is bound by residues 10 to 11 (FI), 31 to 32 (DN), lysine 38, lysine 53, 75 to 79 (EGACS), and asparagine 92. The active-site Proton acceptor is the tyrosine 140. NADP(+) is bound at residue lysine 144. Asparagine 169 contacts substrate. NADP(+) is bound by residues valine 170 and lysine 178. The Proton acceptor role is filled by lysine 178. Substrate contacts are provided by residues serine 180, histidine 187, 201 to 204 (FEGS), arginine 209, and tyrosine 272.

Belongs to the NAD(P)-dependent epimerase/dehydratase family. HldD subfamily. Homopentamer. NADP(+) serves as cofactor.

The enzyme catalyses ADP-D-glycero-beta-D-manno-heptose = ADP-L-glycero-beta-D-manno-heptose. It functions in the pathway nucleotide-sugar biosynthesis; ADP-L-glycero-beta-D-manno-heptose biosynthesis; ADP-L-glycero-beta-D-manno-heptose from D-glycero-beta-D-manno-heptose 7-phosphate: step 4/4. It participates in bacterial outer membrane biogenesis; LPS core biosynthesis. In terms of biological role, catalyzes the interconversion between ADP-D-glycero-beta-D-manno-heptose and ADP-L-glycero-beta-D-manno-heptose via an epimerization at carbon 6 of the heptose. In Klebsiella pneumoniae, this protein is ADP-L-glycero-D-manno-heptose-6-epimerase.